We begin with the raw amino-acid sequence, 247 residues long: Small ribosomal subunit protein uS3 (247 aa).

The KH type-2 domain occupies 39-107 (VRDYLRKKLD…PAQVNIEEIT (69 aa)). The interval 213 to 247 (SVYNPPKEDKTRAPKRRGRSNSNRRNSDRANTDRG) is disordered. Residues 237–247 (RNSDRANTDRG) are compositionally biased toward basic and acidic residues.

This sequence belongs to the universal ribosomal protein uS3 family. As to quaternary structure, part of the 30S ribosomal subunit. Forms a tight complex with proteins S10 and S14.

In terms of biological role, binds the lower part of the 30S subunit head. Binds mRNA in the 70S ribosome, positioning it for translation. The protein is Small ribosomal subunit protein uS3 of Psychrobacter sp. (strain PRwf-1).